The chain runs to 688 residues: Glycine--tRNA ligase beta subunit (688 aa).

It belongs to the class-II aminoacyl-tRNA synthetase family. As to quaternary structure, tetramer of two alpha and two beta subunits.

It localises to the cytoplasm. The enzyme catalyses tRNA(Gly) + glycine + ATP = glycyl-tRNA(Gly) + AMP + diphosphate. In Syntrophomonas wolfei subsp. wolfei (strain DSM 2245B / Goettingen), this protein is Glycine--tRNA ligase beta subunit.